A 518-amino-acid chain; its full sequence is uncharacterized protein (518 aa).

An N-terminal signal peptide occupies residues 1–21; the sequence is MWKWKVILLFLAEMFVSGVNG. Residues Asn30, Asn142, Asn295, Asn342, Asn362, Asn410, and Asn503 are each glycosylated (N-linked (GlcNAc...) asparagine). Residues 389 to 517 form the CUB domain; that stretch reads CPPFGITNSV…RGFWVSITPQ (129 aa).

Its subcellular location is the secreted. This is an uncharacterized protein from Caenorhabditis elegans.